The following is a 134-amino-acid chain: MSWQTYVDDHLMCDIEGHEGHRLTAAAIVGHDGSVWAQSATFPQFKPEEMNGIMTDFNEPGHLAPTGLHLGGTKYMVIQGEAGAVIRGKKGSGGITIKKTGQALVFGIYEEPVTPGQCNMVVERLGDYLLEQGL.

Cys-13 and Cys-118 are disulfide-bonded. An Involved in PIP2 interaction motif is present at residues 84 to 100; that stretch reads AVIRGKKGSGGITIKKT. Residue Thr-114 is modified to Phosphothreonine.

This sequence belongs to the profilin family. In terms of assembly, occurs in many kinds of cells as a complex with monomeric actin in a 1:1 ratio. Phosphorylated by MAP kinases.

It is found in the cytoplasm. Its subcellular location is the cytoskeleton. In terms of biological role, binds to actin and affects the structure of the cytoskeleton. At high concentrations, profilin prevents the polymerization of actin, whereas it enhances it at low concentrations. In Olea europaea (Common olive), this protein is Profilin-3.